Reading from the N-terminus, the 213-residue chain is 3-isopropylmalate dehydratase small subunit (213 aa).

This sequence belongs to the LeuD family. LeuD type 1 subfamily. As to quaternary structure, heterodimer of LeuC and LeuD.

The enzyme catalyses (2R,3S)-3-isopropylmalate = (2S)-2-isopropylmalate. Its pathway is amino-acid biosynthesis; L-leucine biosynthesis; L-leucine from 3-methyl-2-oxobutanoate: step 2/4. In terms of biological role, catalyzes the isomerization between 2-isopropylmalate and 3-isopropylmalate, via the formation of 2-isopropylmaleate. The polypeptide is 3-isopropylmalate dehydratase small subunit (Pseudomonas syringae pv. syringae (strain B728a)).